We begin with the raw amino-acid sequence, 480 residues long: RuvB-like helicase 2 (480 aa).

73–80 contributes to the ATP binding site; the sequence is GEPSTGKT.

Belongs to the RuvB family. Forms homohexameric rings. May form a dodecamer with rept made of two stacked hexameric rings. Component of the chromatin remodeling Ino80 complex.

It localises to the nucleus. It catalyses the reaction ATP + H2O = ADP + phosphate + H(+). Acts as a transcriptional coactivator in Wg signaling caused by altered arm signaling. Pont and rept interfere antagonistically with nuclear arm signaling function, and are required to enhance or reduce arm activity, respectively. Also an essential cofactor for the normal function of Myc; required for cellular proliferation and growth. In terms of biological role, proposed core component of the chromatin remodeling Ino80 complex which is involved in transcriptional regulation, DNA replication and probably DNA repair. This is RuvB-like helicase 2 from Drosophila pseudoobscura pseudoobscura (Fruit fly).